The primary structure comprises 470 residues: Cysteine--tRNA ligase (470 aa).

Residue cysteine 28 participates in Zn(2+) binding. Residues 30–40 carry the 'HIGH' region motif; that stretch reads PTVYNYIHIGN. The Zn(2+) site is built by cysteine 211, histidine 236, and glutamate 240. The 'KMSKS' region motif lies at 270-274; sequence KMSKS. Lysine 273 serves as a coordination point for ATP.

Belongs to the class-I aminoacyl-tRNA synthetase family. As to quaternary structure, monomer. Requires Zn(2+) as cofactor.

Its subcellular location is the cytoplasm. The catalysed reaction is tRNA(Cys) + L-cysteine + ATP = L-cysteinyl-tRNA(Cys) + AMP + diphosphate. The sequence is that of Cysteine--tRNA ligase from Enterococcus faecalis (strain ATCC 700802 / V583).